The chain runs to 116 residues: uncharacterized protein (116 aa).

2 consecutive transmembrane segments (helical) span residues 24 to 44 and 70 to 90; these read VPFAAAGGYPISFLFIKVLTA and VILTHFLVPIFFFLFQYIILS.

Its subcellular location is the membrane. This is an uncharacterized protein from Saccharomyces cerevisiae (strain ATCC 204508 / S288c) (Baker's yeast).